Consider the following 254-residue polypeptide: Triosephosphate isomerase (254 aa).

Position 9 to 11 (9 to 11 (NWK)) interacts with substrate. Residue H96 is the Electrophile of the active site. Residue E169 is the Proton acceptor of the active site. Substrate-binding positions include G175, S215, and 236-237 (GG).

The protein belongs to the triosephosphate isomerase family. In terms of assembly, homodimer.

It localises to the cytoplasm. It catalyses the reaction D-glyceraldehyde 3-phosphate = dihydroxyacetone phosphate. Its pathway is carbohydrate biosynthesis; gluconeogenesis. The protein operates within carbohydrate degradation; glycolysis; D-glyceraldehyde 3-phosphate from glycerone phosphate: step 1/1. Involved in the gluconeogenesis. Catalyzes stereospecifically the conversion of dihydroxyacetone phosphate (DHAP) to D-glyceraldehyde-3-phosphate (G3P). The protein is Triosephosphate isomerase of Borrelia hermsii (strain HS1 / DAH).